The sequence spans 179 residues: Large ribosomal subunit protein uL5 (179 aa).

This sequence belongs to the universal ribosomal protein uL5 family. As to quaternary structure, part of the 50S ribosomal subunit; part of the 5S rRNA/L5/L18/L25 subcomplex. Contacts the 5S rRNA and the P site tRNA. Forms a bridge to the 30S subunit in the 70S ribosome.

This is one of the proteins that bind and probably mediate the attachment of the 5S RNA into the large ribosomal subunit, where it forms part of the central protuberance. In the 70S ribosome it contacts protein S13 of the 30S subunit (bridge B1b), connecting the 2 subunits; this bridge is implicated in subunit movement. Contacts the P site tRNA; the 5S rRNA and some of its associated proteins might help stabilize positioning of ribosome-bound tRNAs. The chain is Large ribosomal subunit protein uL5 from Shewanella loihica (strain ATCC BAA-1088 / PV-4).